Here is a 795-residue protein sequence, read N- to C-terminus: Glycerol-3-phosphate acyltransferase 2, mitochondrial (795 aa).

A disordered region spans residues 1–21 (MATMLEGRCQTQPRSSPSGRE). The Cytoplasmic segment spans residues 1–305 (MATMLEGRCQ…LGPRLSALGQ (305 aa)). A compositionally biased stretch (polar residues) spans 9-18 (CQTQPRSSPS). The interval 180–331 (QLHKGQMKMV…DALLVPVAVT (152 aa)) is acyltransferase. Positions 205-210 (HKTLLD) match the HXXXXD motif motif. Residues 306–332 (AWVGFVVQAVQVGIVPDALLVPVAVTY) traverse the membrane as a helical segment. The Mitochondrial intermembrane segment spans residues 333–449 (DLVPDAPCDI…QLLVRRLSCH (117 aa)). A helical membrane pass occupies residues 450–472 (VLSASVGSSAVMSTAIMATLLLF). Residues 473-795 (KHQKLLGEFS…EQFIRQFICS (323 aa)) are Cytoplasmic-facing. Residue S656 is modified to Phosphoserine. T660 carries the phosphothreonine modification. S662 and S664 each carry phosphoserine.

It belongs to the GPAT/DAPAT family. In terms of assembly, interacts with PIWIL2.

It is found in the mitochondrion outer membrane. The enzyme catalyses sn-glycerol 3-phosphate + an acyl-CoA = a 1-acyl-sn-glycero-3-phosphate + CoA. It catalyses the reaction a 1-acyl-sn-glycero-3-phosphate + an acyl-CoA = a 1,2-diacyl-sn-glycero-3-phosphate + CoA. It carries out the reaction 1-(9Z-octadecenoyl)-sn-glycero-3-phosphate + (9Z)-octadecenoyl-CoA = 1,2-di-(9Z-octadecenoyl)-sn-glycero-3-phosphate + CoA. The catalysed reaction is 1-(9Z-octadecenoyl)-sn-glycero-3-phosphate + (5Z,8Z,11Z,14Z)-eicosatetraenoyl-CoA = 1-(9Z)-octadecenoyl-2-(5Z,8Z,11Z,14Z)-eicosatetraenoyl-sn-glycero-3-phosphate + CoA. The enzyme catalyses (5Z,8Z,11Z,14Z)-eicosatetraenoyl-CoA + sn-glycerol 3-phosphate = 1-(5Z,8Z,11Z,14Z-eicosatetraenoyl)-sn-glycero-3-phosphate + CoA. It participates in phospholipid metabolism; CDP-diacylglycerol biosynthesis; CDP-diacylglycerol from sn-glycerol 3-phosphate: step 1/3. Its activity is regulated as follows. Inhibited by N-ethylmaleimide (NEM). In terms of biological role, transfers an acyl-group from acyl-ACP to the sn-1 position of glycerol-3-phosphate producing a lysophosphatidic acid (LPA), an essential step for the triacylglycerol (TAG) and glycerophospholipids. In vitro also transfers an acyl-group from acyl-ACP to the LPA producing a phosphatidic acid (PA). Prefers arachidonoyl-CoA as the acyl donor. Required for primary processing step during piRNA biosynthesis. Molecular mechanisms by which it promotes piRNA biosynthesis are unclear and do not involve its acyltransferase activity. This is Glycerol-3-phosphate acyltransferase 2, mitochondrial from Homo sapiens (Human).